We begin with the raw amino-acid sequence, 859 residues long: Auxin response factor 2 (859 aa).

The tract at residues 1–48 (MASSEVSMKGNRGGDNFSSSGFSDPKETRNVSVAGEGQKSNSTRSAAA) is disordered. Low complexity predominate over residues 14-23 (GDNFSSSGFS). The segment at residues 164–266 (FCKTLTASDT…ELRVGVRRAM (103 aa)) is a DNA-binding region (TF-B3). Pro residues predominate over residues 396–407 (LAPPALSPVPMP). Disordered stretches follow at residues 396–442 (LAPP…LPAS), 687–736 (IASP…RSCT), and 829–859 (RSEE…AGNS). 2 stretches are compositionally biased toward polar residues: residues 416 to 426 (IAPSSPDSSML) and 695 to 704 (LSDQSKGSKS). Residues 733–817 (RSCTKVHKQG…RKIFIYTKEE (85 aa)) form the PB1 domain. The span at 847 to 859 (SASNPSLSSAGNS) shows a compositional bias: polar residues.

The protein belongs to the ARF family. Homodimers and heterodimers. Interacts with ARF1. Expressed in the whole plant.

The protein resides in the nucleus. Functionally, auxin response factors (ARFs) are transcriptional factors that bind specifically to the DNA sequence 5'-TGTCTC-3' found in the auxin-responsive promoter elements (AuxREs). Could act as transcriptional activator or repressor. Formation of heterodimers with Aux/IAA proteins may alter their ability to modulate early auxin response genes expression. Promotes flowering, stamen development, floral organ abscission and fruit dehiscence. Functions independently of ethylene and cytokinin response pathways. May act as a repressor of cell division and organ growth. This chain is Auxin response factor 2 (ARF2), found in Arabidopsis thaliana (Mouse-ear cress).